The chain runs to 91 residues: Sec-independent protein translocase protein TatA (91 aa).

Residues 1 to 21 form a helical membrane-spanning segment; the sequence is MGIFDWKHWIVILIVVVLVFG. The disordered stretch occupies residues 41-91; that stretch reads KAMNDDDKPAEQPAPQPQQAQPAPQGSPLNQPHTIDAQAHKVDEPIRKDQV. Over residues 51–64 the composition is skewed to low complexity; it reads EQPAPQPQQAQPAP. Over residues 78 to 91 the composition is skewed to basic and acidic residues; that stretch reads QAHKVDEPIRKDQV.

This sequence belongs to the TatA/E family. As to quaternary structure, the Tat system comprises two distinct complexes: a TatABC complex, containing multiple copies of TatA, TatB and TatC subunits, and a separate TatA complex, containing only TatA subunits. Substrates initially bind to the TatABC complex, which probably triggers association of the separate TatA complex to form the active translocon.

The protein resides in the cell inner membrane. In terms of biological role, part of the twin-arginine translocation (Tat) system that transports large folded proteins containing a characteristic twin-arginine motif in their signal peptide across membranes. TatA could form the protein-conducting channel of the Tat system. This chain is Sec-independent protein translocase protein TatA, found in Pseudomonas syringae pv. syringae (strain B728a).